A 228-amino-acid chain; its full sequence is ATP synthase subunit beta, mitochondrial (228 aa).

A mitochondrion-targeting transit peptide spans 1–31; that stretch reads MFALRAAAKADKNLLPFLGQLSRSHAAKAAK. 183-190 is a binding site for ATP; the sequence is GGAGVGKT.

It belongs to the ATPase alpha/beta chains family. As to quaternary structure, F-type ATPases have 2 components, CF(1) - the catalytic core - and CF(0) - the membrane proton channel. CF(1) has five subunits: alpha(3), beta(3), gamma(1), delta(1), epsilon(1). CF(0) has three main subunits: a, b and c.

The protein localises to the mitochondrion. The protein resides in the mitochondrion inner membrane. It carries out the reaction ATP + H2O + 4 H(+)(in) = ADP + phosphate + 5 H(+)(out). Mitochondrial membrane ATP synthase (F(1)F(0) ATP synthase or Complex V) produces ATP from ADP in the presence of a proton gradient across the membrane which is generated by electron transport complexes of the respiratory chain. F-type ATPases consist of two structural domains, F(1) - containing the extramembraneous catalytic core, and F(0) - containing the membrane proton channel, linked together by a central stalk and a peripheral stalk. During catalysis, ATP synthesis in the catalytic domain of F(1) is coupled via a rotary mechanism of the central stalk subunits to proton translocation. Subunits alpha and beta form the catalytic core in F(1). Rotation of the central stalk against the surrounding alpha(3)beta(3) subunits leads to hydrolysis of ATP in three separate catalytic sites on the beta subunits. This Drosophila virilis (Fruit fly) protein is ATP synthase subunit beta, mitochondrial.